A 178-amino-acid polypeptide reads, in one-letter code: METQGVMKEIQYEEFEEKIIEIRRTSKVTKGGKNLSFRVVAIVGNKNGKVGLGIGKAREVPEAIRKAISAAKRNIVEVPVINGTIPHEVIGRQDASKVLLKPAAPGTGIIAGGTVRAVVELAGIQNILTKSLGSTNPLNLALATMNGLKNLLDPRKVAKLRDISVEEVFKGVRRENNA.

Positions 15–78 constitute an S5 DRBM domain; sequence FEEKIIEIRR…SAAKRNIVEV (64 aa).

The protein belongs to the universal ribosomal protein uS5 family. As to quaternary structure, part of the 30S ribosomal subunit. Contacts proteins S4 and S8.

With S4 and S12 plays an important role in translational accuracy. Functionally, located at the back of the 30S subunit body where it stabilizes the conformation of the head with respect to the body. The chain is Small ribosomal subunit protein uS5 from Thermotoga maritima (strain ATCC 43589 / DSM 3109 / JCM 10099 / NBRC 100826 / MSB8).